Reading from the N-terminus, the 349-residue chain is Soluble TNF receptor II (349 aa).

Residues 1 to 19 form the signal peptide; the sequence is MRSVLYSYILFLSCIIING. TNFR-Cys repeat units lie at residues 31–65 and 67–108; these read KCKD…NTQC and PCGS…NRIC. 6 disulfides stabilise this stretch: C32/C43, C44/C57, C47/C65, C68/C83, C86/C100, and C90/C108. N-linked (GlcNAc...) asparagine; by host glycosylation is found at N101, N190, N249, N277, and N313.

It belongs to the orthopoxvirus OPG002 family.

The protein resides in the secreted. In terms of biological role, inhibits host immune defense by binding to host TNF and various chemokines in the extracellular space. Binds host CC chemokines (beta chemokines) and CXC chemokines (alpha chemokines). This Monkeypox virus protein is Soluble TNF receptor II (OPG002).